We begin with the raw amino-acid sequence, 273 residues long: Dermonecrotic toxin LapSicTox-alphaIB2 (273 aa).

The active site involves H5. E25 and D27 together coordinate Mg(2+). H41 functions as the Nucleophile in the catalytic mechanism. 2 disulfides stabilise this stretch: C45-C51 and C47-C190. D85 is a Mg(2+) binding site. N-linked (GlcNAc...) asparagine glycosylation occurs at N250.

Belongs to the arthropod phospholipase D family. Class II subfamily. Mg(2+) serves as cofactor. Expressed by the venom gland.

The protein localises to the secreted. It carries out the reaction an N-(acyl)-sphingosylphosphocholine = an N-(acyl)-sphingosyl-1,3-cyclic phosphate + choline. The catalysed reaction is an N-(acyl)-sphingosylphosphoethanolamine = an N-(acyl)-sphingosyl-1,3-cyclic phosphate + ethanolamine. It catalyses the reaction a 1-acyl-sn-glycero-3-phosphocholine = a 1-acyl-sn-glycero-2,3-cyclic phosphate + choline. The enzyme catalyses a 1-acyl-sn-glycero-3-phosphoethanolamine = a 1-acyl-sn-glycero-2,3-cyclic phosphate + ethanolamine. Its function is as follows. Dermonecrotic toxins cleave the phosphodiester linkage between the phosphate and headgroup of certain phospholipids (sphingolipid and lysolipid substrates), forming an alcohol (often choline) and a cyclic phosphate. This toxin acts on sphingomyelin (SM). It may also act on ceramide phosphoethanolamine (CPE), lysophosphatidylcholine (LPC) and lysophosphatidylethanolamine (LPE), but not on lysophosphatidylserine (LPS), and lysophosphatidylglycerol (LPG). It acts by transphosphatidylation, releasing exclusively cyclic phosphate products as second products. Induces dermonecrosis, hemolysis, increased vascular permeability, edema, inflammatory response, and platelet aggregation. The polypeptide is Dermonecrotic toxin LapSicTox-alphaIB2 (Loxosceles apachea (Apache recluse spider)).